The primary structure comprises 341 residues: Phosphate acyltransferase (341 aa).

This sequence belongs to the PlsX family. As to quaternary structure, homodimer. Probably interacts with PlsY.

The protein resides in the cytoplasm. The catalysed reaction is a fatty acyl-[ACP] + phosphate = an acyl phosphate + holo-[ACP]. The protein operates within lipid metabolism; phospholipid metabolism. Functionally, catalyzes the reversible formation of acyl-phosphate (acyl-PO(4)) from acyl-[acyl-carrier-protein] (acyl-ACP). This enzyme utilizes acyl-ACP as fatty acyl donor, but not acyl-CoA. The polypeptide is Phosphate acyltransferase (Idiomarina loihiensis (strain ATCC BAA-735 / DSM 15497 / L2-TR)).